Here is a 246-residue protein sequence, read N- to C-terminus: Ribonuclease PH (246 aa).

Phosphate is bound by residues R91 and 129 to 131; that span reads GTR.

This sequence belongs to the RNase PH family. Homohexameric ring arranged as a trimer of dimers.

The enzyme catalyses tRNA(n+1) + phosphate = tRNA(n) + a ribonucleoside 5'-diphosphate. Functionally, phosphorolytic 3'-5' exoribonuclease that plays an important role in tRNA 3'-end maturation. Removes nucleotide residues following the 3'-CCA terminus of tRNAs; can also add nucleotides to the ends of RNA molecules by using nucleoside diphosphates as substrates, but this may not be physiologically important. Probably plays a role in initiation of 16S rRNA degradation (leading to ribosome degradation) during starvation. In Burkholderia cenocepacia (strain ATCC BAA-245 / DSM 16553 / LMG 16656 / NCTC 13227 / J2315 / CF5610) (Burkholderia cepacia (strain J2315)), this protein is Ribonuclease PH.